A 41-amino-acid polypeptide reads, in one-letter code: Large ribosomal subunit protein bL36 (41 aa).

This sequence belongs to the bacterial ribosomal protein bL36 family.

The chain is Large ribosomal subunit protein bL36 from Bartonella henselae (strain ATCC 49882 / DSM 28221 / CCUG 30454 / Houston 1) (Rochalimaea henselae).